The primary structure comprises 349 residues: 6-phosphogluconolactonase (349 aa).

The disordered stretch occupies residues Leu125–Ala151. The segment covering Gly138–His147 has biased composition (basic and acidic residues).

The protein belongs to the cycloisomerase 2 family.

The enzyme catalyses 6-phospho-D-glucono-1,5-lactone + H2O = 6-phospho-D-gluconate + H(+). It participates in carbohydrate degradation; pentose phosphate pathway; D-ribulose 5-phosphate from D-glucose 6-phosphate (oxidative stage): step 2/3. Its function is as follows. Catalyzes the hydrolysis of 6-phosphogluconolactone to 6-phosphogluconate. The polypeptide is 6-phosphogluconolactonase (pgl) (Bacillus subtilis (strain 168)).